The chain runs to 263 residues: Phosphatidylglycerol--prolipoprotein diacylglyceryl transferase (263 aa).

A run of 4 helical transmembrane segments spans residues 6–26 (VIFS…VLGI), 50–70 (LLTA…VLIY), 85–105 (TWEG…AVII), and 112–132 (IPIF…LFLG). Arg133 contacts a 1,2-diacyl-sn-glycero-3-phospho-(1'-sn-glycerol). Transmembrane regions (helical) follow at residues 169-189 (LYEA…LFFL), 197-217 (GALT…VEFF), and 233-253 (MGQL…LGAL).

The protein belongs to the Lgt family.

The protein localises to the cell membrane. It carries out the reaction L-cysteinyl-[prolipoprotein] + a 1,2-diacyl-sn-glycero-3-phospho-(1'-sn-glycerol) = an S-1,2-diacyl-sn-glyceryl-L-cysteinyl-[prolipoprotein] + sn-glycerol 1-phosphate + H(+). It participates in protein modification; lipoprotein biosynthesis (diacylglyceryl transfer). Catalyzes the transfer of the diacylglyceryl group from phosphatidylglycerol to the sulfhydryl group of the N-terminal cysteine of a prolipoprotein, the first step in the formation of mature lipoproteins. The sequence is that of Phosphatidylglycerol--prolipoprotein diacylglyceryl transferase from Wolbachia sp. subsp. Drosophila simulans (strain wRi).